The sequence spans 268 residues: Tryptophan synthase alpha chain (268 aa).

Active-site proton acceptor residues include Glu49 and Asp60.

It belongs to the TrpA family. As to quaternary structure, tetramer of two alpha and two beta chains.

It catalyses the reaction (1S,2R)-1-C-(indol-3-yl)glycerol 3-phosphate + L-serine = D-glyceraldehyde 3-phosphate + L-tryptophan + H2O. The protein operates within amino-acid biosynthesis; L-tryptophan biosynthesis; L-tryptophan from chorismate: step 5/5. In terms of biological role, the alpha subunit is responsible for the aldol cleavage of indoleglycerol phosphate to indole and glyceraldehyde 3-phosphate. This chain is Tryptophan synthase alpha chain, found in Haemophilus influenzae (strain PittGG).